The primary structure comprises 165 residues: Destrin (165 aa).

N-acetylalanine is present on alanine 2. The ADF-H domain maps to 4–153 (GVQVADEVCR…NRACIAEKLG (150 aa)). The Nuclear localization signal signature appears at 30–34 (KKRKK).

This sequence belongs to the actin-binding proteins ADF family.

Its function is as follows. Actin-depolymerizing protein. Severs actin filaments (F-actin) and binds to actin monomers (G-actin). Acts in a pH-independent manner. In Gallus gallus (Chicken), this protein is Destrin (DSTN).